We begin with the raw amino-acid sequence, 289 residues long: D-alanine aminotransferase (289 aa).

Tyr31 is a substrate binding site. Residue Arg50 coordinates pyridoxal 5'-phosphate. Substrate is bound by residues Arg99 and His101. Lys147 (proton acceptor) is an active-site residue. Lys147 carries the N6-(pyridoxal phosphate)lysine modification. Pyridoxal 5'-phosphate is bound at residue Glu179.

Belongs to the class-IV pyridoxal-phosphate-dependent aminotransferase family. As to quaternary structure, homodimer. Requires pyridoxal 5'-phosphate as cofactor.

It carries out the reaction D-alanine + 2-oxoglutarate = D-glutamate + pyruvate. Functionally, acts on the D-isomers of alanine, leucine, aspartate, glutamate, aminobutyrate, norvaline and asparagine. The enzyme transfers an amino group from a substrate D-amino acid to the pyridoxal phosphate cofactor to form pyridoxamine and an alpha-keto acid in the first half-reaction. The second half-reaction is the reverse of the first, transferring the amino group from the pyridoxamine to a second alpha-keto acid to form the product D-amino acid via a ping-pong mechanism. This is an important process in the formation of D-alanine and D-glutamate, which are essential bacterial cell wall components. The chain is D-alanine aminotransferase (dat) from Listeria monocytogenes serotype 4b (strain F2365).